Consider the following 67-residue polypeptide: DNA gyrase inhibitor YacG (67 aa).

4 residues coordinate Zn(2+): Cys8, Cys11, Cys27, and Cys31.

It belongs to the DNA gyrase inhibitor YacG family. Interacts with GyrB. It depends on Zn(2+) as a cofactor.

Its function is as follows. Inhibits all the catalytic activities of DNA gyrase by preventing its interaction with DNA. Acts by binding directly to the C-terminal domain of GyrB, which probably disrupts DNA binding by the gyrase. The chain is DNA gyrase inhibitor YacG from Ralstonia pickettii (strain 12J).